The sequence spans 151 residues: UPF0179 protein MJ1627 (151 aa).

This sequence belongs to the UPF0179 family.

In Methanocaldococcus jannaschii (strain ATCC 43067 / DSM 2661 / JAL-1 / JCM 10045 / NBRC 100440) (Methanococcus jannaschii), this protein is UPF0179 protein MJ1627.